The chain runs to 449 residues: MLNMESPQMYADAVQTLAQLDLKKEPPLQQATIGQITLTAMSTAQQQQQQQQQQQQQQQQQQQQQQQQPQQQTTDANNNTSQDAALLVKQHAMHQMQQVAALGSNNNLLQKQMLQQYSTQTDLDELTTQEITLDLQHLIDDQFRDTETLGIFSDMVTSPGGLSATLPPSGMVSAAAKVLQQQTLRNQHGYGGRGGGGGAGGALAYMPQPVHATYNNSSDENSSVGSDSSTIKEEPIDPEYRRHLQEAASQQAAFMGNGAGLYNGYGSGANGLTGGGNPLNGGNTTPSSNGSNGSTGSSNGSQFTNLTTANVLAHHNLPHLAAAAGAHNLLKQHSKLHAQQQHQQHQQQQQHRKHSNKHVDKGTDEYRRRRERNNIAVRKSREKAKVRSREVEERVKSLLKEKDALIRQLGEMTNELQLHKQIYMQLMNHANPEVSRVCRSFLNTNEHSL.

Disordered stretches follow at residues 211-233 (HATYNNSSDENSSVGSDSSTIKE), 276-302 (GNPLNGGNTTPSSNGSNGSTGSSNGSQ), and 334-386 (SKLH…KAKV). Low complexity-rich tracts occupy residues 215 to 229 (NNSSDENSSVGSDSS), 280 to 301 (NGGNTTPSSNGSNGSTGSSNGS), and 339 to 349 (QQQHQQHQQQQ). The segment covering 357-368 (KHVDKGTDEYRR) has biased composition (basic and acidic residues). Residues 363 to 426 (TDEYRRRRER…QLHKQIYMQL (64 aa)) enclose the bZIP domain. The interval 367 to 396 (RRRRERNNIAVRKSREKAKVRSREVEERVK) is basic motif. A leucine-zipper region spans residues 398-405 (LLKEKDAL).

It belongs to the bZIP family. C/EBP subfamily. Binds DNA as a dimer and can form stable heterodimers. Interacts with trbl. Ubiquitination/deubiquitination regulates border cell migration. Ubiquitination is stimulated by trbl, which leads to proteasomal degradation and inhibits border cell migration. Deubiquitination by Usp47, leads to its stabilization and promotes border cell migration.

It is found in the nucleus. Its function is as follows. Required for the expression of gene products mediating border cell migration. Among the DNA sequences that this protein binds with high affinity is a conserved site within the promoter of its gene. This is CCAAT/enhancer-binding protein (slbo) from Drosophila melanogaster (Fruit fly).